The following is a 29-amino-acid chain: Cytochrome b6-f complex subunit 8 (29 aa).

Residues 3–23 traverse the membrane as a helical segment; that stretch reads IISLAWAALMVVFTFSLSLVV.

The protein belongs to the PetN family. In terms of assembly, the 4 large subunits of the cytochrome b6-f complex are cytochrome b6, subunit IV (17 kDa polypeptide, PetD), cytochrome f and the Rieske protein, while the 4 small subunits are PetG, PetL, PetM and PetN. The complex functions as a dimer.

The protein resides in the plastid. It localises to the chloroplast thylakoid membrane. Functionally, component of the cytochrome b6-f complex, which mediates electron transfer between photosystem II (PSII) and photosystem I (PSI), cyclic electron flow around PSI, and state transitions. The chain is Cytochrome b6-f complex subunit 8 from Nicotiana tomentosiformis (Tobacco).